A 90-amino-acid chain; its full sequence is Small ribosomal subunit protein bS16 (90 aa).

It belongs to the bacterial ribosomal protein bS16 family.

The polypeptide is Small ribosomal subunit protein bS16 (Bacillus pumilus (strain SAFR-032)).